The primary structure comprises 529 residues: Delayed-rectifier potassium channel regulatory subunit KCNS1 (529 aa).

The Cytoplasmic portion of the chain corresponds to M1–L217. A helical membrane pass occupies residues P218–I239. Residues H240 to P270 lie on the Extracellular side of the membrane. Residues V271–L293 form a helical membrane-spanning segment. The Cytoplasmic segment spans residues A294–P304. The helical transmembrane segment at L305–A322 threads the bilayer. The Extracellular portion of the chain corresponds to G323–L340. The chain crosses the membrane as a helical; Voltage-sensor span at residues G341 to H361. The Cytoplasmic portion of the chain corresponds to S362–Y376. Residues R377–Y398 form a helical membrane-spanning segment. Over T399 to I411 the chain is Extracellular. An intramembrane region (helical) is located at residues P412–T423. The short motif at T424–D429 is the Selectivity filter element. An intramembrane segment occupies T424–V431. The Extracellular segment spans residues P432 to K438. The helical transmembrane segment at L439–Y467 threads the bilayer. Topologically, residues R468 to Y529 are cytoplasmic. The tract at residues G494 to Y529 is disordered. Basic and acidic residues predominate over residues T502–D514.

It belongs to the potassium channel family. S (TC 1.A.1.2) subfamily. Kv9.1/KCNS1 sub-subfamily. Heterotetramer with KCNB1. Heterotetramer with KCNB2. Does not form homomultimers.

The protein resides in the cell membrane. Its function is as follows. Potassium channel regulatory subunit that modulate the delayed rectifier voltage-gated potassium channel activity of KCNB1 and KCNB2 by altering their kinetics, expression levels, and shifting the half-inactivation potential to more polarized values. While it does not form functional channels on its own, it can form functional heterotetrameric channels with KCNB1 and KCNB2. Each regulatory subunit has unique regulatory properties that can lead to extensive inhibition, significant changes in kinetics, and/or substantial shifts in the voltage dependencies of the inactivation process. The chain is Delayed-rectifier potassium channel regulatory subunit KCNS1 from Macaca mulatta (Rhesus macaque).